The following is a 505-amino-acid chain: ATP synthase subunit beta (505 aa).

Residue 157 to 164 (GGAGVGKT) participates in ATP binding.

Belongs to the ATPase alpha/beta chains family. As to quaternary structure, F-type ATPases have 2 components, CF(1) - the catalytic core - and CF(0) - the membrane proton channel. CF(1) has five subunits: alpha(3), beta(3), gamma(1), delta(1), epsilon(1). CF(0) has three main subunits: a(1), b(2) and c(9-12). The alpha and beta chains form an alternating ring which encloses part of the gamma chain. CF(1) is attached to CF(0) by a central stalk formed by the gamma and epsilon chains, while a peripheral stalk is formed by the delta and b chains.

The protein resides in the cell inner membrane. The catalysed reaction is ATP + H2O + 4 H(+)(in) = ADP + phosphate + 5 H(+)(out). Functionally, produces ATP from ADP in the presence of a proton gradient across the membrane. The catalytic sites are hosted primarily by the beta subunits. In Bacteroides thetaiotaomicron (strain ATCC 29148 / DSM 2079 / JCM 5827 / CCUG 10774 / NCTC 10582 / VPI-5482 / E50), this protein is ATP synthase subunit beta.